A 430-amino-acid polypeptide reads, in one-letter code: Bifunctional protein GlmU (430 aa).

The pyrophosphorylase stretch occupies residues 1-223 (MSFSVVILAA…KNEFQGVNSK (223 aa)). Residues 8-11 (LAAG), Lys22, and 81-82 (GT) contribute to the UDP-N-acetyl-alpha-D-glucosamine site. Asp102 contributes to the Mg(2+) binding site. The UDP-N-acetyl-alpha-D-glucosamine site is built by Gly135, Glu149, Asn164, and Asn221. Position 221 (Asn221) interacts with Mg(2+). The segment at 224 to 244 (YDLANAEIVMQDRIKRHWMQQ) is linker. An N-acetyltransferase region spans residues 245 to 430 (GVIMRLPQTI…DFYYKFFGKN (186 aa)). UDP-N-acetyl-alpha-D-glucosamine contacts are provided by Arg308 and Lys325. The Proton acceptor role is filled by His336. UDP-N-acetyl-alpha-D-glucosamine is bound by residues Tyr339 and Asn350. Residues Ala353, 359-360 (NY), Ser378, Ala396, and Arg413 contribute to the acetyl-CoA site.

In the N-terminal section; belongs to the N-acetylglucosamine-1-phosphate uridyltransferase family. This sequence in the C-terminal section; belongs to the transferase hexapeptide repeat family. In terms of assembly, homotrimer. The cofactor is Mg(2+).

Its subcellular location is the cytoplasm. It catalyses the reaction alpha-D-glucosamine 1-phosphate + acetyl-CoA = N-acetyl-alpha-D-glucosamine 1-phosphate + CoA + H(+). The catalysed reaction is N-acetyl-alpha-D-glucosamine 1-phosphate + UTP + H(+) = UDP-N-acetyl-alpha-D-glucosamine + diphosphate. It functions in the pathway nucleotide-sugar biosynthesis; UDP-N-acetyl-alpha-D-glucosamine biosynthesis; N-acetyl-alpha-D-glucosamine 1-phosphate from alpha-D-glucosamine 6-phosphate (route II): step 2/2. The protein operates within nucleotide-sugar biosynthesis; UDP-N-acetyl-alpha-D-glucosamine biosynthesis; UDP-N-acetyl-alpha-D-glucosamine from N-acetyl-alpha-D-glucosamine 1-phosphate: step 1/1. It participates in bacterial outer membrane biogenesis; LPS lipid A biosynthesis. In terms of biological role, catalyzes the last two sequential reactions in the de novo biosynthetic pathway for UDP-N-acetylglucosamine (UDP-GlcNAc). The C-terminal domain catalyzes the transfer of acetyl group from acetyl coenzyme A to glucosamine-1-phosphate (GlcN-1-P) to produce N-acetylglucosamine-1-phosphate (GlcNAc-1-P), which is converted into UDP-GlcNAc by the transfer of uridine 5-monophosphate (from uridine 5-triphosphate), a reaction catalyzed by the N-terminal domain. This Nitratiruptor sp. (strain SB155-2) protein is Bifunctional protein GlmU.